A 90-amino-acid chain; its full sequence is Small ribosomal subunit protein mS37 (90 aa).

Cys27 and Cys58 are disulfide-bonded.

Belongs to the mitochondrion-specific ribosomal protein mS37 family. As to quaternary structure, component of the mitochondrial small ribosomal subunit (mt-SSU). Mature N.crassa 74S mitochondrial ribosomes consist of a small (37S) and a large (54S) subunit. The 37S small subunit contains a 16S ribosomal RNA (16S mt-rRNA) and 32 different proteins. The 54S large subunit contains a 23S rRNA (23S mt-rRNA) and 42 different proteins.

It is found in the mitochondrion. Component of the mitochondrial ribosome (mitoribosome), a dedicated translation machinery responsible for the synthesis of mitochondrial genome-encoded proteins, including at least some of the essential transmembrane subunits of the mitochondrial respiratory chain. The mitoribosomes are attached to the mitochondrial inner membrane and translation products are cotranslationally integrated into the membrane. The sequence is that of Small ribosomal subunit protein mS37 (mrp10) from Neurospora crassa (strain ATCC 24698 / 74-OR23-1A / CBS 708.71 / DSM 1257 / FGSC 987).